The primary structure comprises 133 residues: Small ribosomal subunit protein uS11 (133 aa).

A disordered region spans residues 1 to 23; that stretch reads MPPKTRGAVRKPRKKDKKNIALG. The segment covering 7 to 17 has biased composition (basic residues); it reads GAVRKPRKKDK.

The protein belongs to the universal ribosomal protein uS11 family. Part of the 30S ribosomal subunit. Interacts with proteins S7 and S18. Binds to IF-3.

Functionally, located on the platform of the 30S subunit, it bridges several disparate RNA helices of the 16S rRNA. Forms part of the Shine-Dalgarno cleft in the 70S ribosome. The polypeptide is Small ribosomal subunit protein uS11 (Arthrobacter sp. (strain FB24)).